We begin with the raw amino-acid sequence, 449 residues long: MGQSVRNQSTIGYIRETATKFLDRETAGGIFLIIATIVALLLANSQWAGAYHHFLGDELLFEFSEHLSFGLTIEEWINDGLMAIFFLVAGLELKREVMVGELSSIKKASAPLLAALGGMAVPALIFISLNLGTENIKGWGIPMATDIAYSLGIIGLLGKNVPRQLKTFLIALAIADDIGAILVIALFYSNELSWIYLGSGMGAFGLLLLMNWTGVKNLIWYIIIGIILWYCFLNSGIHPTIAGVLFAITIPIVPKLDSKILKERTATNVTNLEKTELEKLNPLQDKKQQIILKAIKTDTENSRPPLLKLENSLVDFNAFFIIPIFAVANAGVKLDVNLIEVVSGSLGLGILLGLAIGKVTGIGIFTLIGQKLGVSELHITLNWKHIIGIGMIAGIGFTMSLFITNLAFNDQELIKISKISILIASLLAAIGGAVILLLTSNKGRKNIVK.

A run of 12 helical transmembrane segments spans residues 30–50 (IFLI…WAGA), 69–89 (FGLT…FLVA), 112–132 (LLAA…LNLG), 138–158 (GWGI…GLLG), 168–188 (FLIA…ALFY), 192–212 (LSWI…LMNW), 218–238 (LIWY…SGIH), 241–261 (IAGV…SKIL), 312–332 (SLVD…NAGV), 348–368 (LGIL…FTLI), 386–406 (IIGI…ITNL), and 419–439 (ISIL…LLLT).

Belongs to the NhaA Na(+)/H(+) (TC 2.A.33) antiporter family.

The protein resides in the cell inner membrane. It carries out the reaction Na(+)(in) + 2 H(+)(out) = Na(+)(out) + 2 H(+)(in). Na(+)/H(+) antiporter that extrudes sodium in exchange for external protons. This is Na(+)/H(+) antiporter NhaA from Christiangramia forsetii (strain DSM 17595 / CGMCC 1.15422 / KT0803) (Gramella forsetii).